Here is a 206-residue protein sequence, read N- to C-terminus: Probable N-acetyltransferase 14 (206 aa).

The N-acetyltransferase domain maps to 9 to 206 (LSVREMREEE…TIVQEFRKDI (198 aa)). Helical transmembrane passes span 37–57 (LILYILTRPMTLLLMAVASSG) and 60–80 (FILNSFSVALVIPVLLTIVGL).

It belongs to the camello family.

Its subcellular location is the membrane. In terms of biological role, probable acetyltransferase. The polypeptide is Probable N-acetyltransferase 14 (nat14) (Xenopus tropicalis (Western clawed frog)).